Here is a 210-residue protein sequence, read N- to C-terminus: PEP-dependent dihydroxyacetone kinase, ADP-binding subunit DhaL (210 aa).

Positions 6-206 (TQIVNWLTRC…VMFMMQMLAL (201 aa)) constitute a DhaL domain. 3 residues coordinate Mg(2+): D30, D35, and D37. ADP is bound by residues 38-41 (HGLN), 79-80 (AS), G121, M130, R178, and 191-193 (DPG).

As to quaternary structure, homodimer. The dihydroxyacetone kinase complex is composed of a homodimer of DhaM, a homodimer of DhaK and the subunit DhaL. DhaL also forms a complex with DhaR. Mg(2+) is required as a cofactor.

The protein resides in the cytoplasm. It carries out the reaction dihydroxyacetone + phosphoenolpyruvate = dihydroxyacetone phosphate + pyruvate. Its pathway is polyol metabolism; glycerol degradation. Functionally, ADP-binding subunit of the dihydroxyacetone kinase, which is responsible for the phosphoenolpyruvate (PEP)-dependent phosphorylation of dihydroxyacetone. DhaL-ADP is converted to DhaL-ATP via a phosphoryl group transfer from DhaM and transmits it to dihydroxyacetone bound to DhaK. DhaL also acts as coactivator of the transcription activator DhaR by binding to the sensor domain of DhaR. In the presence of dihydroxyacetone, DhaL-ADP displaces DhaK and stimulates DhaR activity. In the absence of dihydroxyacetone, DhaL-ADP is converted by the PTS to DhaL-ATP, which does not bind to DhaR. The polypeptide is PEP-dependent dihydroxyacetone kinase, ADP-binding subunit DhaL (Escherichia coli (strain K12)).